A 244-amino-acid polypeptide reads, in one-letter code: UPF0280 protein MJ1526 (244 aa).

The protein belongs to the UPF0280 family.

The sequence is that of UPF0280 protein MJ1526 from Methanocaldococcus jannaschii (strain ATCC 43067 / DSM 2661 / JAL-1 / JCM 10045 / NBRC 100440) (Methanococcus jannaschii).